Here is an 89-residue protein sequence, read N- to C-terminus: Putative regulatory protein BPUM_1466 (89 aa).

This sequence belongs to the RemA family.

The chain is Putative regulatory protein BPUM_1466 from Bacillus pumilus (strain SAFR-032).